The chain runs to 277 residues: Probable endonuclease 4 (277 aa).

Zn(2+) contacts are provided by H67, H107, E141, D173, H176, H210, D223, H225, and E255.

This sequence belongs to the AP endonuclease 2 family. It depends on Zn(2+) as a cofactor.

It catalyses the reaction Endonucleolytic cleavage to 5'-phosphooligonucleotide end-products.. In terms of biological role, endonuclease IV plays a role in DNA repair. It cleaves phosphodiester bonds at apurinic or apyrimidinic (AP) sites, generating a 3'-hydroxyl group and a 5'-terminal sugar phosphate. This chain is Probable endonuclease 4, found in Haloarcula marismortui (strain ATCC 43049 / DSM 3752 / JCM 8966 / VKM B-1809) (Halobacterium marismortui).